Consider the following 478-residue polypeptide: Ribosomal RNA small subunit methyltransferase F (478 aa).

S-adenosyl-L-methionine-binding positions include 123-129 (AAAPGSK), Glu147, Asp174, and Asp192. Cys245 acts as the Nucleophile in catalysis.

The protein belongs to the class I-like SAM-binding methyltransferase superfamily. RsmB/NOP family.

The protein localises to the cytoplasm. It catalyses the reaction cytidine(1407) in 16S rRNA + S-adenosyl-L-methionine = 5-methylcytidine(1407) in 16S rRNA + S-adenosyl-L-homocysteine + H(+). Its function is as follows. Specifically methylates the cytosine at position 1407 (m5C1407) of 16S rRNA. In Vibrio campbellii (strain ATCC BAA-1116), this protein is Ribosomal RNA small subunit methyltransferase F.